The following is a 288-amino-acid chain: Alpha/beta hydrolase domain-containing protein 17B (288 aa).

Residues S170, D235, and H264 each act as charge relay system in the active site. Residue S282 is modified to Phosphoserine.

Belongs to the AB hydrolase superfamily. ABHD17 family. Post-translationally, palmitoylated on cysteine residues located in a cysteine cluster at the N-terminus which promotes membrane localization. Palmitoylation is required for post-synaptic localization and for depalmitoylating activity towards DLG4/PSD95. In terms of tissue distribution, expressed in brain.

Its subcellular location is the cell membrane. The protein localises to the recycling endosome membrane. The protein resides in the cell projection. It localises to the dendritic spine. It is found in the postsynaptic density membrane. It carries out the reaction S-hexadecanoyl-L-cysteinyl-[protein] + H2O = L-cysteinyl-[protein] + hexadecanoate + H(+). Hydrolyzes fatty acids from S-acylated cysteine residues in proteins. Has depalmitoylating activity towards DLG4/PSD95. Has depalmitoylating activity towards GAP43. Has depalmitoylating activity towards MAP6. Has depalmitoylating activity towards NRAS. The chain is Alpha/beta hydrolase domain-containing protein 17B from Mus musculus (Mouse).